The sequence spans 220 residues: Iron-sulfur cluster repair protein YtfE (220 aa).

The protein belongs to the RIC family. YtfE subfamily. In terms of assembly, homodimer.

The protein localises to the cytoplasm. Functionally, di-iron-containing protein involved in the repair of iron-sulfur clusters damaged by oxidative and nitrosative stress conditions. This Escherichia coli O6:K15:H31 (strain 536 / UPEC) protein is Iron-sulfur cluster repair protein YtfE.